The following is a 1372-amino-acid chain: DNA-directed RNA polymerase subunit beta' (1372 aa).

Residues cysteine 69, cysteine 71, cysteine 84, and cysteine 87 each contribute to the Zn(2+) site. Residues aspartate 460, aspartate 462, and aspartate 464 each coordinate Mg(2+). Cysteine 808, cysteine 882, cysteine 889, and cysteine 892 together coordinate Zn(2+).

Belongs to the RNA polymerase beta' chain family. In terms of assembly, the RNAP catalytic core consists of 2 alpha, 1 beta, 1 beta' and 1 omega subunit. When a sigma factor is associated with the core the holoenzyme is formed, which can initiate transcription. Requires Mg(2+) as cofactor. It depends on Zn(2+) as a cofactor.

The enzyme catalyses RNA(n) + a ribonucleoside 5'-triphosphate = RNA(n+1) + diphosphate. DNA-dependent RNA polymerase catalyzes the transcription of DNA into RNA using the four ribonucleoside triphosphates as substrates. This Rickettsia akari (strain Hartford) protein is DNA-directed RNA polymerase subunit beta'.